A 215-amino-acid polypeptide reads, in one-letter code: MNAPALSPARRTKKLPPLRVGIGGPVGSGKTTLLEMLCKAMRERYDLVAITNDIYTKEDQRLLTVAGALPEERIMGVETGGCPHTAIREDASINLEAVDRMLSRFPDADIVFIESGGDNLAATFSPELSDLTIYVIDVAGGEKIPRKGGPGITKSDLLVINKTDLAPLVGANLDVMASDTKKMRGERPYVMTNLKALEGVADVVAFIEKKGLLMV.

24–31 (GPVGSGKT) is a binding site for GTP.

The protein belongs to the SIMIBI class G3E GTPase family. UreG subfamily. Homodimer. UreD, UreF and UreG form a complex that acts as a GTP-hydrolysis-dependent molecular chaperone, activating the urease apoprotein by helping to assemble the nickel containing metallocenter of UreC. The UreE protein probably delivers the nickel.

The protein resides in the cytoplasm. Its function is as follows. Facilitates the functional incorporation of the urease nickel metallocenter. This process requires GTP hydrolysis, probably effectuated by UreG. In Burkholderia ambifaria (strain MC40-6), this protein is Urease accessory protein UreG.